Here is a 219-residue protein sequence, read N- to C-terminus: Histone H1.01 (219 aa).

2 stretches are compositionally biased toward low complexity: residues 1–19 and 27–39; these read MSET…GAKA and AAGG…PAGP. 2 disordered regions span residues 1-40 and 94-219; these read MSET…AGPS and LVQT…AKKK. Position 2 is an N-acetylserine (serine 2). The H15 domain maps to 37–110; it reads AGPSVTELIT…GASGSFRLNK (74 aa). 4 stretches are compositionally biased toward basic residues: residues 119–134, 142–159, 167–185, and 192–219; these read APRK…KPAA, KKPK…KAKK, KAAK…KKAA, and KAVK…AKKK.

It belongs to the histone H1/H5 family.

It is found in the nucleus. It localises to the chromosome. Histones H1 are necessary for the condensation of nucleosome chains into higher-order structures. This chain is Histone H1.01, found in Gallus gallus (Chicken).